Reading from the N-terminus, the 814-residue chain is E3 ubiquitin-protein ligase TRIM71 (814 aa).

An RING-type zinc finger spans residues 12 to 76; the sequence is CPLCKEMCVS…SLQLRCPVCD (65 aa). A disordered region spans residues 111–146; that stretch reads QQQSNGGRTASNRQRSASCSSSGLLRRAPPSQSEPR. Low complexity predominate over residues 120–138; sequence ASNRQRSASCSSSGLLRRA. The B box-type 1; atypical zinc-finger motif lies at 142–189; the sequence is QSEPRCSSCDDGNGASSHCLDCQENLCDNCLRAHQRVRLTKDHFIERF. The Zn(2+) site is built by Cys147, Cys150, Cys171, His175, Cys224, His227, Cys247, and His252. The B box-type 2 zinc-finger motif lies at 219–260; that stretch reads PERLYCQQHDEEVLHFYCDSCSVPICRECTMGRHAGHSFVYL. Residues 282 to 370 are a coiled coil; it reads RQAIQLSLEQ…INAVQQVLEE (89 aa). A Filamin repeat occupies 425–526; that stretch reads SSGAFAALTK…IENSPFKVNV (102 aa). NHL repeat units lie at residues 539–582, 586–629, 633–676, 680–723, 727–770, and 774–814; these read TLSF…FKPC, HHKF…FTFE, LLKF…FGPD, LNKY…IKPD, AHFL…FEPN, and LCKF…ILAF.

Belongs to the TRIM/RBCC family.

It localises to the cytoplasm. The protein resides in the P-body. It catalyses the reaction S-ubiquitinyl-[E2 ubiquitin-conjugating enzyme]-L-cysteine + [acceptor protein]-L-lysine = [E2 ubiquitin-conjugating enzyme]-L-cysteine + N(6)-ubiquitinyl-[acceptor protein]-L-lysine.. It functions in the pathway protein modification; protein ubiquitination. E3 ubiquitin-protein ligase that cooperates with the microRNAs (miRNAs) machinery and promotes embryonic stem cells proliferation and maintenance. Binds to miRNAs and participates in post-transcriptional repression of transcripts. Required to maintain proliferation and prevent premature differentiation of neural progenitor cells during early neural development. This is E3 ubiquitin-protein ligase TRIM71 (trim71) from Xenopus tropicalis (Western clawed frog).